The following is a 548-amino-acid chain: MDSQRNLLVIALLFVSFMIWQAWEQDKNPQPQTQQTTQTTTTAAGSAADQGVPASGQGKMITVKTDVLDLTINTRGGDVEQALLPAYPKELGSNEPFQLLETTPQFIYQAQSGLTGRDGPDNPANGPRPLYNVEKDAFVLADGQNELQVPMTYTDAAGNTFTKTFVFKRGDYAVNVNYSVQNTGEKPLEVSTFGQLKQSVNLPPHRDTGSSNFALHTFRGAAYSTPDEKYEKYKFDTIADNENLNVSSKGGWVAMLQQYFATAWIPRNDGTNNFYTANLGNGIVAIGYKAQPVLVQPGQTSAMTSTLWVGPEIQDKMAAVAPHLDLTVDYGWLWFISQPLFKLLKWIHSFVGNWGFSIIIITFIVRGIMYPLTKAQYTSMAKMRMLQPKIQAMRERLGDDKQRQSQEMMALYKAEKVNPLGGCFPLIIQMPIFLALYYMLMGSIELRHAPFALWIHDLSAQDPYYILPILMGVTMFFIQKMSPTTVTDPMQQKIMTFMPVIFTVFFLWFPSGLVLYYIVSNLVTIIQQQLIYRGLEKRGLHSREKKKS.

A helical transmembrane segment spans residues 6–26 (NLLVIALLFVSFMIWQAWEQD). The segment at 28–56 (NPQPQTQQTTQTTTTAAGSAADQGVPASG) is disordered. The span at 29–42 (PQPQTQQTTQTTTT) shows a compositional bias: low complexity. Transmembrane regions (helical) follow at residues 350–370 (FVGN…GIMY), 424–444 (FPLI…MGSI), 458–478 (LSAQ…MFFI), and 499–519 (PVIF…YYIV).

The protein belongs to the OXA1/ALB3/YidC family. Type 1 subfamily. As to quaternary structure, interacts with the Sec translocase complex via SecD. Specifically interacts with transmembrane segments of nascent integral membrane proteins during membrane integration.

Its subcellular location is the cell inner membrane. Functionally, required for the insertion and/or proper folding and/or complex formation of integral membrane proteins into the membrane. Involved in integration of membrane proteins that insert both dependently and independently of the Sec translocase complex, as well as at least some lipoproteins. Aids folding of multispanning membrane proteins. The protein is Membrane protein insertase YidC of Salmonella paratyphi C (strain RKS4594).